We begin with the raw amino-acid sequence, 657 residues long: UvrABC system protein B (657 aa).

Residues K29 to L416 form the Helicase ATP-binding domain. Residue G42–T49 participates in ATP binding. The Beta-hairpin signature appears at Y95–V118. The 163-residue stretch at Q435–I597 folds into the Helicase C-terminal domain. Positions A615–Q650 constitute a UVR domain.

It belongs to the UvrB family. In terms of assembly, forms a heterotetramer with UvrA during the search for lesions. Interacts with UvrC in an incision complex.

It localises to the cytoplasm. The UvrABC repair system catalyzes the recognition and processing of DNA lesions. A damage recognition complex composed of 2 UvrA and 2 UvrB subunits scans DNA for abnormalities. Upon binding of the UvrA(2)B(2) complex to a putative damaged site, the DNA wraps around one UvrB monomer. DNA wrap is dependent on ATP binding by UvrB and probably causes local melting of the DNA helix, facilitating insertion of UvrB beta-hairpin between the DNA strands. Then UvrB probes one DNA strand for the presence of a lesion. If a lesion is found the UvrA subunits dissociate and the UvrB-DNA preincision complex is formed. This complex is subsequently bound by UvrC and the second UvrB is released. If no lesion is found, the DNA wraps around the other UvrB subunit that will check the other stand for damage. The polypeptide is UvrABC system protein B (Mycoplasma pneumoniae (strain ATCC 29342 / M129 / Subtype 1) (Mycoplasmoides pneumoniae)).